Reading from the N-terminus, the 983-residue chain is UPF0182 protein MLBr00644 (983 aa).

The next 7 membrane-spanning stretches (helical) occupy residues 19–39 (LIMV…LVDA), 63–83 (VVVF…GLAV), 113–133 (LIGV…AQSY), 175–195 (FVAV…FGGI), 210–230 (LQLV…YWLD), 259–279 (KLIL…AITL), and 287–307 (IGLV…PLIV).

This sequence belongs to the UPF0182 family.

It is found in the cell membrane. This Mycobacterium leprae (strain Br4923) protein is UPF0182 protein MLBr00644.